A 358-amino-acid polypeptide reads, in one-letter code: 3-isopropylmalate dehydrogenase (358 aa).

Substrate is bound by residues arginine 92, arginine 102, arginine 130, and aspartate 224. Mg(2+) is bound by residues aspartate 224, aspartate 248, and aspartate 252. 282–294 is a binding site for NAD(+); that stretch reads GSAPDIAGQGIAN.

The protein belongs to the isocitrate and isopropylmalate dehydrogenases family. LeuB type 1 subfamily. Homodimer. Mg(2+) is required as a cofactor. The cofactor is Mn(2+).

It is found in the cytoplasm. The catalysed reaction is (2R,3S)-3-isopropylmalate + NAD(+) = 4-methyl-2-oxopentanoate + CO2 + NADH. The protein operates within amino-acid biosynthesis; L-leucine biosynthesis; L-leucine from 3-methyl-2-oxobutanoate: step 3/4. Catalyzes the oxidation of 3-carboxy-2-hydroxy-4-methylpentanoate (3-isopropylmalate) to 3-carboxy-4-methyl-2-oxopentanoate. The product decarboxylates to 4-methyl-2 oxopentanoate. The sequence is that of 3-isopropylmalate dehydrogenase from Bordetella parapertussis (strain 12822 / ATCC BAA-587 / NCTC 13253).